The primary structure comprises 302 residues: Glutaminase (302 aa).

The substrate site is built by S61, N111, E155, N162, Y186, Y238, and V256.

It belongs to the glutaminase family. Homotetramer.

The catalysed reaction is L-glutamine + H2O = L-glutamate + NH4(+). In Stutzerimonas stutzeri (strain A1501) (Pseudomonas stutzeri), this protein is Glutaminase.